The chain runs to 396 residues: E3 ubiquitin-protein transferase MAEA (396 aa).

The tract at residues methionine 1–arginine 124 is extracellular and involved in cell to cell contact. The residue at position 28 (threonine 28) is a Phosphothreonine. The 33-residue stretch at lysine 121–aspartate 153 folds into the LisH domain. A CTLH domain is found at methionine 159–aspartate 216. The RING-Gid-type zinc finger occupies cysteine 314–threonine 381.

As to quaternary structure, identified in the CTLH complex that contains GID4, RANBP9 and/or RANBP10, MKLN1, MAEA, RMND5A (or alternatively its paralog RMND5B), GID8, ARMC8, WDR26 and YPEL5. Within this complex, MAEA, RMND5A (or alternatively its paralog RMND5B), GID8, WDR26, and RANBP9 and/or RANBP10 form the catalytic core, while GID4, MKLN1, ARMC8 and YPEL5 have ancillary roles. Interacts with F-actin. Autoubiquitinated as component of the CTLH E3 ubiquitin-protein ligase complex (in vitro).

Its subcellular location is the cytoplasm. It is found in the nucleus. The protein localises to the nucleoplasm. It localises to the nucleus matrix. The protein resides in the cell membrane. Its subcellular location is the cytoskeleton. The enzyme catalyses S-ubiquitinyl-[E2 ubiquitin-conjugating enzyme]-L-cysteine + [acceptor protein]-L-lysine = [E2 ubiquitin-conjugating enzyme]-L-cysteine + N(6)-ubiquitinyl-[acceptor protein]-L-lysine.. Functionally, core component of the CTLH E3 ubiquitin-protein ligase complex that selectively accepts ubiquitin from UBE2H and mediates ubiquitination and subsequent proteasomal degradation of the transcription factor HBP1. MAEA and RMND5A are both required for catalytic activity of the CTLH E3 ubiquitin-protein ligase complex. MAEA is required for normal cell proliferation. The CTLH E3 ubiquitin-protein ligase complex is not required for the degradation of enzymes involved in gluconeogenesis, such as FBP1. Plays a role in erythroblast enucleation during erythrocyte maturation and in the development of mature macrophages. Mediates the attachment of erythroid cell to mature macrophages; this MAEA-mediated contact inhibits erythroid cell apoptosis. Participates in erythroblastic island formation, which is the functional unit of definitive erythropoiesis. Associates with F-actin to regulate actin distribution in erythroblasts and macrophages. May contribute to nuclear architecture and cells division events. This chain is E3 ubiquitin-protein transferase MAEA (MAEA), found in Pongo abelii (Sumatran orangutan).